Consider the following 665-residue polypeptide: MSGGGGDDVVCTGWLRKSPPEKKLRRYAWKKRWFILRSGRMSGDPDVLEYYKNEHSKKPLRIINLNFCEQVDAGLTFNKKELQDSFVFDIKTSERTFYLVAETEADMNKWVQSICQICGFNQAEESTDSLRNLSSASHGPRSSPAEFSSSQHLLRERKSSAPSHSSQPTLFTFEPPMTSHMQPALSTSAPQEYLYLHQCISRRTENSRSASFSQGTRQKSDTAVQKLAQSNGHCINGVSNQVHGFYSLPKPSRHNTEFKDSTYDLPRSLASHGHTKSSLTGSETDNEDVYTFKMPSNTLCREFGDLLVDNMDVPTTPLSAYQIPRTFTLDKNHNAMTVATSGDSAIAPPPRPPKPSQAETPRWGSPQQKPPIGENSRSVAATIPRRNTLPAMDNSRLHRASSCETYEYPTRGSGESASWSAESPGKTAVGRSDSASSDENYVPMNPGSSTLLAMERAGDNSQSAYIPMGPGPHHFDPLGYPSTALPIHRGPSRGSEIQPPPVNRNLKPDRKAKPTPLDLRNNTVIDELPFKSPVTKSWSRINHTFNSSSSQYCRPISTQSITSTDSGDSEENYVPMQNPVSASPVPSGTNSPAPRKSTGSVDYLALDFQPGSPSPHRKPSTSSVTSDEKVDYVQVDKEKTQALQNTMQEWTDVRQSSEPSKGAKL.

Ser-2 is subject to Phosphoserine. One can recognise a PH domain in the interval 8-119 (DVVCTGWLRK…WVQSICQICG (112 aa)). Residues 131 to 183 (RNLSSASHGPRSSPAEFSSSQHLLRERKSSAPSHSSQPTLFTFEPPMTSHMQP) form a disordered region. Ser-135, Ser-142, Ser-143, Ser-149, Ser-150, Ser-160, Ser-165, Ser-211, Ser-220, and Ser-261 each carry phosphoserine. A compositionally biased stretch (polar residues) spans 160-170 (SAPSHSSQPTL). The residue at position 262 (Thr-262) is a Phosphothreonine. Tyr-263 carries the post-translational modification Phosphotyrosine. A Phosphothreonine modification is found at Thr-275. A phosphoserine mark is found at Ser-278 and Ser-282. A Phosphothreonine modification is found at Thr-284. Tyr-290 carries the post-translational modification Phosphotyrosine. Phosphothreonine is present on Thr-328. 2 disordered regions span residues 340–442 (TSGD…ENYV) and 491–517 (PSRGSEIQPPPVNRNLKPDRKAKPTPL). Residues 348 to 355 (PPPRPPKP) carry the SH3-binding motif. Ser-365 is subject to Phosphoserine. 2 positions are modified to phosphothreonine: Thr-382 and Thr-388. Ser-402 bears the Phosphoserine mark. At Thr-405 the chain carries Phosphothreonine. The segment covering 412 to 423 (GSGESASWSAES) has biased composition (low complexity). Ser-420 and Ser-423 each carry phosphoserine. Tyr-441 carries the post-translational modification Phosphotyrosine. The SH3-binding signature appears at 499 to 508 (PPPVNRNLKP). Ser-532 bears the Phosphoserine mark. Polar residues-rich tracts occupy residues 548–566 (SSSQYCRPISTQSITSTDS) and 578–600 (NPVSASPVPSGTNSPAPRKSTGS). Residues 548–631 (SSSQYCRPIS…SSVTSDEKVD (84 aa)) are disordered. A Phosphoserine modification is found at Ser-612. The residue at position 632 (Tyr-632) is a Phosphotyrosine. Over residues 646–659 (TMQEWTDVRQSSEP) the composition is skewed to polar residues. Residues 646-665 (TMQEWTDVRQSSEPSKGAKL) are disordered.

Belongs to the GAB family. Part of a complex composed of EEIG1, TNFRSF11A/RANK, PLCG2, GAB2, TEC and BTK; complex formation increases in the presence of TNFSF11/RANKL. Interacts with HCK. Interacts with SHC1; may mediate interaction with receptors. Interacts with SYK. Interacts with PI-3 kinase. Interacts with GRB2 (via SH3 2 domain). Interacts (phosphorylated) with PTPN11. Interacts with TNFRSF11A (via cytoplasmic domain). Interacts (phosphorylated) with 14-3-3 family proteins SFN, YWHAB, YWHAE, YWHAG, YWHAH, YWHAQ and YWHAZ; prevents interaction with GRB2 and attenuates GAB2 signaling. Post-translationally, phosphorylated upon EGF stimulation. Phosphorylated on tyrosine residues by HCK upon IL6 signaling. Phosphorylated on tyrosine residue(s) by the thrombopoietin receptor (TPOR), stem cell factor receptor (SCFR), and T-cell and B-cell antigen receptors, gp130, IL-2R and IL-3R. Phosphorylated upon stimulation of TNFRSF11A/RANK by TNFSF11/RANKL. In terms of processing, dephosphorylated by PTPN11.

Its subcellular location is the cytoplasm. It localises to the cell membrane. The protein localises to the membrane raft. Adapter protein which acts downstream of several membrane receptors including cytokine, antigen, hormone, cell matrix and growth factor receptors to regulate multiple signaling pathways. Regulates osteoclast differentiation mediating the TNFRSF11A/RANK signaling. In allergic response, it plays a role in mast cells activation and degranulation through PI-3-kinase regulation. Also involved in the regulation of cell proliferation and hematopoiesis. This Rattus norvegicus (Rat) protein is GRB2-associated-binding protein 2 (Gab2).